The following is a 103-amino-acid chain: Large ribosomal subunit protein bL21 (103 aa).

This sequence belongs to the bacterial ribosomal protein bL21 family. In terms of assembly, part of the 50S ribosomal subunit. Contacts protein L20.

Its function is as follows. This protein binds to 23S rRNA in the presence of protein L20. The polypeptide is Large ribosomal subunit protein bL21 (Borreliella afzelii (strain PKo) (Borrelia afzelii)).